The following is a 373-amino-acid chain: 3 beta-hydroxysteroid dehydrogenase/Delta 5--&gt;4-isomerase type 4 (373 aa).

The active-site Proton acceptor is Tyr155. Lys159 is a binding site for NAD(+). The chain crosses the membrane as a helical span at residues 288 to 308; sequence LPLLYWLAFLLEIVSFFLHPV. At Lys350 the chain carries N6-acetyllysine.

Belongs to the 3-beta-HSD family. Skin, placenta, also detectable in ovary and adrenal gland.

Its subcellular location is the endoplasmic reticulum membrane. The protein localises to the mitochondrion membrane. It catalyses the reaction a 3beta-hydroxy-Delta(5)-steroid + NAD(+) = a 3-oxo-Delta(5)-steroid + NADH + H(+). The enzyme catalyses a 3-oxo-Delta(5)-steroid = a 3-oxo-Delta(4)-steroid. It participates in lipid metabolism; steroid biosynthesis. Its function is as follows. 3-beta-HSD is a bifunctional enzyme, that catalyzes the oxidative conversion of Delta(5)-ene-3-beta-hydroxy steroid, and the oxidative conversion of ketosteroids. The 3-beta-HSD enzymatic system plays a crucial role in the biosynthesis of all classes of hormonal steroids. This chain is 3 beta-hydroxysteroid dehydrogenase/Delta 5--&gt;4-isomerase type 4 (Hsd3b6), found in Rattus norvegicus (Rat).